The following is a 696-amino-acid chain: Serotransferrin (696 aa).

Transferrin-like domains follow at residues 6–332 and 346–672; these read VRWC…NLRE and VRWC…NLRK. Cystine bridges form between Cys9-Cys47 and Cys19-Cys38. The residue at position 23 (Arg23) is a Dimethylated arginine. N-linked (GlcNAc...) asparagine glycosylation is present at Asn25. Residues Asp62 and Tyr94 each contribute to the Fe(3+) site. Intrachain disulfides connect Cys117–Cys198, Cys157–Cys173, Cys160–Cys181, Cys170–Cys183, and Cys231–Cys245. Hydrogencarbonate is bound by residues Thr119, Arg123, Ala125, and Gly126. Tyr192 provides a ligand contact to Fe(3+). His253 lines the Fe(3+) pocket. Disulfide bonds link Cys343–Cys605, Cys349–Cys381, Cys359–Cys372, Cys406–Cys682, Cys423–Cys646, Cys456–Cys532, Cys480–Cys673, Cys490–Cys504, Cys501–Cys515, Cys572–Cys586, and Cys624–Cys629. Ser374 bears the Phosphoserine mark. Fe(3+) contacts are provided by Asp396 and Tyr431. Thr458, Arg462, Ala464, and Gly465 together coordinate hydrogencarbonate. N-linked (GlcNAc...) asparagine glycosylation occurs at Asn497. Tyr526 lines the Fe(3+) pocket. His594 provides a ligand contact to Fe(3+). Position 674 is a phosphoserine (Ser674).

The protein belongs to the transferrin family. As to quaternary structure, monomer. Part of a complex composed of SLC40A1/ferroportin, TF/transferrin and HEPH/hephaestin that transfers iron from cells to transferrin. In terms of tissue distribution, expressed by the liver and secreted in plasma.

It localises to the secreted. Functionally, transferrins are iron binding transport proteins which can bind two Fe(3+) ions in association with the binding of an anion, usually bicarbonate. It is responsible for the transport of iron from sites of absorption and heme degradation to those of storage and utilization. Serum transferrin may also have a further role in stimulating cell proliferation. This Sus scrofa (Pig) protein is Serotransferrin (TF).